A 205-amino-acid polypeptide reads, in one-letter code: Snake venom metalloproteinase BmooMPalpha-I (205 aa).

The Peptidase M12B domain occupies 8–204 (RYIELVVVAD…HNPQCILNEP (197 aa)). Positions 11 and 95 each coordinate Ca(2+). Intrachain disulfides connect C119–C199, C159–C183, and C161–C166. Residue H144 coordinates Zn(2+). The active site involves E145. Residues H148 and H154 each coordinate Zn(2+). C199 and N202 together coordinate Ca(2+).

Belongs to the venom metalloproteinase (M12B) family. P-I subfamily. As to quaternary structure, monomer. Zn(2+) is required as a cofactor. Expressed by the venom gland.

It is found in the secreted. With respect to regulation, inhibited by EDTA. Not inhibited by the serine proteinase inhibitors aprotinin and benzamidine. Functionally, snake venom zinc metalloproteinase that cleaves the alpha chain of fibrinogen (FGA) first followed by the beta chain (FGB) and shows no effect on the gamma chain. Cleaves only the beta chain of fibrin, leaving the gamma-dimer untouched. Shows proteolytic activity towards azocasein. Causes defibrinogenation when intraperitoneally administered on mice. This Bothrops moojeni (Lance-headed viper) protein is Snake venom metalloproteinase BmooMPalpha-I.